A 548-amino-acid polypeptide reads, in one-letter code: Chaperonin GroEL (548 aa).

ATP-binding positions include 30–33 (TLGP), K51, 87–91 (DGTTT), G415, and D496.

The protein belongs to the chaperonin (HSP60) family. In terms of assembly, forms a cylinder of 14 subunits composed of two heptameric rings stacked back-to-back. Interacts with the co-chaperonin GroES.

Its subcellular location is the cytoplasm. The catalysed reaction is ATP + H2O + a folded polypeptide = ADP + phosphate + an unfolded polypeptide.. In terms of biological role, together with its co-chaperonin GroES, plays an essential role in assisting protein folding. The GroEL-GroES system forms a nano-cage that allows encapsulation of the non-native substrate proteins and provides a physical environment optimized to promote and accelerate protein folding. The chain is Chaperonin GroEL from Haemophilus influenzae (strain ATCC 51907 / DSM 11121 / KW20 / Rd).